Reading from the N-terminus, the 98-residue chain is Integration host factor subunit alpha (98 aa).

The segment at 52–73 (FDLREKNQRPGRNPKTGEDIPI) is disordered.

Belongs to the bacterial histone-like protein family. As to quaternary structure, heterodimer of an alpha and a beta chain.

In terms of biological role, this protein is one of the two subunits of integration host factor, a specific DNA-binding protein that functions in genetic recombination as well as in transcriptional and translational control. The polypeptide is Integration host factor subunit alpha (Aeromonas hydrophila subsp. hydrophila (strain ATCC 7966 / DSM 30187 / BCRC 13018 / CCUG 14551 / JCM 1027 / KCTC 2358 / NCIMB 9240 / NCTC 8049)).